The primary structure comprises 98 residues: MSPIFINITLAFTISLLGMLVYRSHLMASLLCLEGMMMSLFITIALMASNTHSPLINIMPITLLVFAACETAVGLALLVSISNTYGLDYIHNLNLLQC.

3 helical membrane-spanning segments follow: residues 1-21 (MSPI…GMLV), 26-46 (LMAS…TIAL), and 61-81 (ITLL…LVSI).

This sequence belongs to the complex I subunit 4L family. Core subunit of respiratory chain NADH dehydrogenase (Complex I) which is composed of 45 different subunits.

The protein localises to the mitochondrion inner membrane. The catalysed reaction is a ubiquinone + NADH + 5 H(+)(in) = a ubiquinol + NAD(+) + 4 H(+)(out). In terms of biological role, core subunit of the mitochondrial membrane respiratory chain NADH dehydrogenase (Complex I) which catalyzes electron transfer from NADH through the respiratory chain, using ubiquinone as an electron acceptor. Part of the enzyme membrane arm which is embedded in the lipid bilayer and involved in proton translocation. This Chlorocebus aethiops (Green monkey) protein is NADH-ubiquinone oxidoreductase chain 4L (MT-ND4L).